The primary structure comprises 175 residues: Heme-dependent oxidative N-demethylase delta subunit (175 aa).

In terms of assembly, the heme-dependent oxidative N-demethylase (HODM) is a heterotetramer composed of a catalytic alpha subunit, a FMN/2Fe-2S-dependent oxidoreductase beta subunit, a gamma subunit with putative aminotransferase activity, and a delta subunit of unknown function.

In terms of biological role, component of the heme-dependent oxidative N-demethylase (HODM) enzyme, that catalyzes the NADPH-dependent oxidation of dimethylamine (DMA) to methylamine (MA) and formaldehyde. Functions in bacterial methylated amine catabolism, linking alkylamine oxidation to the tetrahydrofolate C1 pool. The function of the delta subunit is unknown. This chain is Heme-dependent oxidative N-demethylase delta subunit, found in Ectopseudomonas mendocina (strain ymp) (Pseudomonas mendocina).